The sequence spans 64 residues: MPKVKTKSGAKKRFKLTGSGKIKRKSAYHSHILTKKSTKRKRNLVHAHLVSAADESNVRAMLKI.

Residues 1-28 (MPKVKTKSGAKKRFKLTGSGKIKRKSAY) form a disordered region.

Belongs to the bacterial ribosomal protein bL35 family.

The polypeptide is Large ribosomal subunit protein bL35 (Cytophaga hutchinsonii (strain ATCC 33406 / DSM 1761 / CIP 103989 / NBRC 15051 / NCIMB 9469 / D465)).